Reading from the N-terminus, the 366-residue chain is Cyclin-O protein A (366 aa).

Disordered regions lie at residues 18 to 55 (AAFS…GIKK) and 80 to 99 (YETP…PYDS).

This sequence belongs to the cyclin family.

Its subcellular location is the cytoplasm. Functionally, specifically required for generation of multiciliated cells, possibly by promoting a cell cycle state compatible with centriole amplification and maturation. Acts downstream of mcidas to promote mother centriole amplification and maturation in preparation for apical docking. This chain is Cyclin-O protein A (ccno-a), found in Xenopus laevis (African clawed frog).